The following is a 336-amino-acid chain: Potassium channel subfamily K member 1 (336 aa).

The Cytoplasmic segment spans residues Met-1–Ala-20. A helical transmembrane segment spans residues Trp-21–Phe-41. Topologically, residues Ser-42–Asp-103 are extracellular. Asn-95 carries N-linked (GlcNAc...) asparagine glycosylation. The helical intramembrane region spans Phe-104–Ser-116. The stretch at Thr-117–His-122 is an intramembrane region. Positions Thr-117–His-122 are selectivity filter 1. The Extracellular portion of the chain corresponds to Thr-123–Ala-132. Residues Phe-133–Ile-156 form a helical membrane-spanning segment. Residues Thr-157–Ile-181 are Cytoplasmic-facing. A helical membrane pass occupies residues Val-182 to Val-202. At Phe-203 to Asn-211 the chain is on the extracellular side. The helical intramembrane region spans Phe-212–Ser-224. The tract at residues Thr-225–Asp-230 is selectivity filter 2. The stretch at Thr-225 to Tyr-231 is an intramembrane region. Topologically, residues Val-232–Glu-243 are extracellular. Residues Leu-244–Phe-267 form a helical membrane-spanning segment. Residues Cys-268–His-336 are Cytoplasmic-facing. Lys-274 participates in a covalent cross-link: Glycyl lysine isopeptide (Lys-Gly) (interchain with G-Cter in SUMO). The interval Ile-293 to Leu-299 is important for intracellular retention in recycling endosomes.

This sequence belongs to the two pore domain potassium channel (TC 1.A.1.8) family. Homodimer; disulfide-linked. Heterodimer with KCNK2; disulfide-linked. In astrocytes, forms mostly heterodimeric potassium channels with KCNK2, with only a minor proportion of functional channels containing homodimeric KCNK1. Interacts with KCNK3 and KCNK9, forming functional heterodimeric channels. Interacts with GNG4. Identified in a complex with PSD and ARF6; interacts only with PSD that is bound to ARF6. Interacts with UBE2I. Sumoylation is controversial. Sumoylated by UBE2I. Not sumoylated when expressed in xenopus oocytes or mammalian cells. Sumoylation inactivates the channel, but does not interfere with expression at the cell membrane. Sumoylation of a single subunit is sufficient to silence the dimeric channel. Sumoylation of KCNK1 is sufficient to silence heterodimeric channels formed by KCNK1 and KCNK3 or KCNK9. Desumoylated by SENP1; this activates the channel. Desumoylated by SENP1; this strongly increases halothane-mediated activation of heterodimeric channels formed with KCNK9. SENP1 treatment has no effect.

It localises to the cell membrane. It is found in the recycling endosome. The protein resides in the synaptic cell membrane. Its subcellular location is the cytoplasmic vesicle. The protein localises to the perikaryon. It localises to the cell projection. It is found in the dendrite. The protein resides in the apical cell membrane. The enzyme catalyses K(+)(in) = K(+)(out). It carries out the reaction NH4(+)(in) = NH4(+)(out). The catalysed reaction is Na(+)(in) = Na(+)(out). It catalyses the reaction Rb(+)(in) = Rb(+)(out). The enzyme catalyses Cs(+)(in) = Cs(+)(out). It carries out the reaction Li(+)(in) = Li(+)(out). The catalysed reaction is L-glutamate(out) = L-glutamate(in). It catalyses the reaction chloride(in) = chloride(out). Ion channel that contributes to passive transmembrane potassium transport and to the regulation of the resting membrane potential in brain astrocytes, but also in kidney and in other tissues. Forms dimeric channels through which potassium ions pass in accordance with their electrochemical gradient. The channel is selective for K(+) ions at physiological potassium concentrations and at neutral pH, but becomes permeable to Na(+) at subphysiological K(+) levels and upon acidification of the extracellular medium. The homodimer has very low potassium channel activity, when expressed in heterologous systems, and can function as weakly inward rectifying potassium channel. Channel activity is modulated by activation of serotonin receptors. Heterodimeric channels containing KCNK1 and KCNK2 have much higher activity, and may represent the predominant form in astrocytes. Heterodimeric channels containing KCNK1 and KCNK3 or KCNK9 have much higher activity. Heterodimeric channels formed by KCNK1 and KCNK9 may contribute to halothane-sensitive currents. Mediates outward rectifying potassium currents in dentate gyrus granule cells and contributes to the regulation of their resting membrane potential. Contributes to the regulation of action potential firing in dentate gyrus granule cells and down-regulates their intrinsic excitability. In astrocytes, the heterodimer formed by KCNK1 and KCNK2 is required for rapid glutamate release in response to activation of G-protein coupled receptors, such as F2R and CNR1. Required for normal ion and water transport in the kidney. Contributes to the regulation of the resting membrane potential of pancreatic beta cells. The low channel activity of homodimeric KCNK1 may be due to sumoylation. The low channel activity may be due to rapid internalization from the cell membrane and retention in recycling endosomes. Permeable to monovalent cations with ion selectivity for K(+) &gt; Rb(+) &gt;&gt; NH4(+) &gt;&gt; Cs(+) = Na(+) = Li(+). The protein is Potassium channel subfamily K member 1 of Cavia porcellus (Guinea pig).